The chain runs to 1111 residues: Serine/threonine-protein kinase Nek10 (1111 aa).

A compositionally biased stretch (basic and acidic residues) spans 1–16 (MPDQDTKAKSTEKTAD). Disordered regions lie at residues 1–24 (MPDQDTKAKSTEKTADKQQGTTTR) and 47–72 (AINFDSAQNNMTKSEPTIRTGGHRAR). A compositionally biased stretch (polar residues) spans 47 to 63 (AINFDSAQNNMTKSEPT). Residues 481-514 (YKDLVSQLNLLLEDELKQIAENIESINQKKAPLK) adopt a coiled-coil conformation. Residues 519–791 (YAVLDHLGSG…MISDVMMKYL (273 aa)) enclose the Protein kinase domain. ATP is bound by residues 525–533 (LGSGAFGCV) and Lys548. The Proton acceptor role is filled by Asp655.

It belongs to the protein kinase superfamily. NEK Ser/Thr protein kinase family. NIMA subfamily. As to quaternary structure, interacts with RAF1 and MAP2K1; the interaction is direct with RAF1 and required for ERK1/2-signaling pathway activation in response to UV irradiation. Requires Mg(2+) as cofactor. In terms of tissue distribution, expressed in the mammary gland, lung, spleen, and kidney.

It catalyses the reaction L-seryl-[protein] + ATP = O-phospho-L-seryl-[protein] + ADP + H(+). The enzyme catalyses L-threonyl-[protein] + ATP = O-phospho-L-threonyl-[protein] + ADP + H(+). Functionally, plays a role in the cellular response to UV irradiation. Mediates G2/M cell cycle arrest, MEK autoactivation and ERK1/2-signaling pathway activation in response to UV irradiation. In ciliated cells, it is involved in the regulation of mucociliary transport. The protein is Serine/threonine-protein kinase Nek10 of Mus musculus (Mouse).